Here is a 201-residue protein sequence, read N- to C-terminus: Probable nicotinate-nucleotide adenylyltransferase (201 aa).

Belongs to the NadD family.

The catalysed reaction is nicotinate beta-D-ribonucleotide + ATP + H(+) = deamido-NAD(+) + diphosphate. Its pathway is cofactor biosynthesis; NAD(+) biosynthesis; deamido-NAD(+) from nicotinate D-ribonucleotide: step 1/1. Catalyzes the reversible adenylation of nicotinate mononucleotide (NaMN) to nicotinic acid adenine dinucleotide (NaAD). The sequence is that of Probable nicotinate-nucleotide adenylyltransferase from Clostridium botulinum (strain Loch Maree / Type A3).